The chain runs to 434 residues: UDP-N-acetylmuramate--L-alanine ligase (434 aa).

108 to 114 (GSHGKTT) contacts ATP.

The protein belongs to the MurCDEF family.

Its subcellular location is the cytoplasm. It carries out the reaction UDP-N-acetyl-alpha-D-muramate + L-alanine + ATP = UDP-N-acetyl-alpha-D-muramoyl-L-alanine + ADP + phosphate + H(+). It functions in the pathway cell wall biogenesis; peptidoglycan biosynthesis. Its function is as follows. Cell wall formation. The polypeptide is UDP-N-acetylmuramate--L-alanine ligase (Geobacillus thermodenitrificans (strain NG80-2)).